A 176-amino-acid polypeptide reads, in one-letter code: Ferredoxin-type protein NapF (176 aa).

4Fe-4S ferredoxin-type domains are found at residues 39–68 (VENSIFVARCTRCGDCLSVCETNILVKGDA) and 71–100 (PEVRFDNGECTFCGKCVDACKQPIFYPRDQ). [4Fe-4S] cluster-binding residues include Cys-48, Cys-51, Cys-54, Cys-58, Cys-80, Cys-83, Cys-86, Cys-90, Cys-113, Cys-121, Cys-124, Cys-128, Cys-152, Cys-155, Cys-158, and Cys-162. 4Fe-4S ferredoxin-type domains lie at 119-138 (IECRTCQDNCPANAIRFKLQ) and 143-172 (AQPLVNFDACNGCGACVQGCPVNAITMNDL).

It belongs to the NapF family. In terms of assembly, interacts with the cytoplasmic NapA precursor. Requires [4Fe-4S] cluster as cofactor.

The protein resides in the cytoplasm. In terms of biological role, could be involved in the maturation of NapA, the catalytic subunit of the periplasmic nitrate reductase, before its export into the periplasm. This chain is Ferredoxin-type protein NapF, found in Haemophilus influenzae (strain ATCC 51907 / DSM 11121 / KW20 / Rd).